Here is a 140-residue protein sequence, read N- to C-terminus: Probable deoxyuridine 5'-triphosphate nucleotidohydrolase (140 aa).

Substrate is bound by residues 62-64 (RSG), 76-79 (GVID), Arg-130, and 135-136 (FG).

It belongs to the dUTPase family. Homotrimer. Mg(2+) serves as cofactor.

It catalyses the reaction dUTP + H2O = dUMP + diphosphate + H(+). It functions in the pathway pyrimidine metabolism; dUMP biosynthesis; dUMP from dCTP (dUTP route): step 2/2. Its function is as follows. This enzyme is involved in nucleotide metabolism: it produces dUMP, the immediate precursor of thymidine nucleotides and it decreases the intracellular concentration of dUTP so that uracil cannot be incorporated into DNA. This Schizosaccharomyces pombe (strain 972 / ATCC 24843) (Fission yeast) protein is Probable deoxyuridine 5'-triphosphate nucleotidohydrolase.